The chain runs to 24 residues: Cryptonin (24 aa).

Its function is as follows. Antimicrobial peptide, active against the Gram-negative bacterium E.coli K12-594 (MIC=3.12 ug/ml), the Gram-positive bacteria B.subtilis KCTC 3086 (MIC=3.12 ug/ml), S.aureus KCTC 1928 (MIC=25 ug/ml) and M.luteus KCTC 3063 (MIC=1.56 ug/ml), the antibiotic resistant bacteria methicillin-resistant S.aureus (MRSA) (MIC=25 ug/ml) and vancomycin-resistant Enterococci (VRE) (MIC=25 ug/ml), and the fungi C.albicans KCTC 7965 (MIC=50 ug/ml) and C.tropicalis KCTC 1925 (MIC=3.12 ug/ml). Has very low hemolytic activity on rat erythrocytes. The chain is Cryptonin from Cryptotympana dubia (Korean horse cicada).